The primary structure comprises 642 residues: MRTDSKTPLLDTIATPTDLRRLKESDLAQLADELRTETIDAVSVTGGHLGAGLGVVELTVALHYVFDTPHDRLIWDVGHQAYPHKILTGRRDRIRTLRRAGGLSGFTKRSESVYDPFGTAHSSTSISAGLGMAAATTLSGGNNNVIAVIGDGSMSAGMAYEAMNNAGAMHSRLIIILNDNEMSIAPPAGALSAYLARLVSGGTYRTVREAAKQLGRHLPHFIYDRARKTEEFARNFWAGGTMFEELGIYYVGPIDGHNLDHLLPVLKNVRDFKETGPILVHVVTQKGKGYAPAAAASDKYHSVNTFDVVTGVQTKPKANAPSYTRVFADALVKEAERDDKIVAITAAMPGGTGLDVFGKAFPERTFDVGIAEQHAVTFAAGLATEGYRPFCALYSTFLQRGYDQVVHDVAIQNLPVRFAIDRAGLVGADGATHAGSFDVSYLGILPNMVIMAAADEAELVHMVATAAAYDEGPIAFRYPRGEGVGIELPQIGEILDIGRGRIVREGTTVALLSLGTRLAEASKAAEQLASYGISVTVADARFAKPLDLDLVRRLAKNHEVLITIEEGSVGGFGSFVMQALAEEGLLDGTGLKFRSMVLPDTFLDHDKPEKLYAQAGLDAKGIVAKVLATLGRENEAHQSLIA.

Thiamine diphosphate is bound by residues His79 and 120–122 (AHS). Asp151 lines the Mg(2+) pocket. Thiamine diphosphate contacts are provided by residues 152–153 (GS), Asn180, Tyr290, and Glu372. Asn180 contributes to the Mg(2+) binding site.

Belongs to the transketolase family. DXPS subfamily. Homodimer. Requires Mg(2+) as cofactor. Thiamine diphosphate is required as a cofactor.

It catalyses the reaction D-glyceraldehyde 3-phosphate + pyruvate + H(+) = 1-deoxy-D-xylulose 5-phosphate + CO2. It functions in the pathway metabolic intermediate biosynthesis; 1-deoxy-D-xylulose 5-phosphate biosynthesis; 1-deoxy-D-xylulose 5-phosphate from D-glyceraldehyde 3-phosphate and pyruvate: step 1/1. Its function is as follows. Catalyzes the acyloin condensation reaction between C atoms 2 and 3 of pyruvate and glyceraldehyde 3-phosphate to yield 1-deoxy-D-xylulose-5-phosphate (DXP). The protein is 1-deoxy-D-xylulose-5-phosphate synthase of Beijerinckia indica subsp. indica (strain ATCC 9039 / DSM 1715 / NCIMB 8712).